A 212-amino-acid chain; its full sequence is UPF0319 protein PBPRA2789 (212 aa).

A signal peptide spans 1 to 21 (MKKILLAFTLPLVLASQTAMA).

It belongs to the UPF0319 family.

This Photobacterium profundum (strain SS9) protein is UPF0319 protein PBPRA2789.